The sequence spans 488 residues: 1-aminocyclopropane-1-carboxylate synthase-like protein 1 (488 aa).

An N6-(pyridoxal phosphate)lysine modification is found at lysine 273.

The protein belongs to the class-I pyridoxal-phosphate-dependent aminotransferase family. In terms of assembly, homodimer. As to expression, expressed in young leaves and flowers. Not expressed in roots.

This Arabidopsis thaliana (Mouse-ear cress) protein is 1-aminocyclopropane-1-carboxylate synthase-like protein 1 (ACS1).